The chain runs to 714 residues: Solute carrier family 12 member 8 (714 aa).

6 helical membrane passes run 37–60 (VLFG…VLFL), 72–93 (LLGM…LSGI), 99–116 (SSIG…VLGG), 123–142 (GLLY…TGFA), 154–173 (IWAV…GINL), and 185–205 (LLLF…FTHL). Residue asparagine 221 is glycosylated (N-linked (GlcNAc...) asparagine). 5 consecutive transmembrane segments (helical) span residues 233 to 254 (FFTV…FNMG), 266 to 289 (LGSL…LGAI), 309 to 331 (GFLF…LYGA), 360 to 377 (PVAA…FVFV), and 383 to 403 (LAPI…YSYF). 2 disordered regions span residues 471-503 (KLES…TLQD) and 530-550 (GQES…PEGT). Residues 533 to 548 (SCWNKQTSKSEGTQPE) show a composition bias toward polar residues. Helical transmembrane passes span 593 to 616 (CNPW…QWVY) and 622 to 643 (GVAA…LGSA).

This sequence belongs to the SLC12A transporter family. Ubiquitous with very low level in normal skin.

It localises to the membrane. Its function is as follows. Cation/chloride cotransporter that may play a role in the control of keratinocyte proliferation. This chain is Solute carrier family 12 member 8 (SLC12A8), found in Homo sapiens (Human).